A 268-amino-acid chain; its full sequence is uncharacterized protein (268 aa).

It to M.tuberculosis Rv0025 and Rv0026.

This is an uncharacterized protein from Mycobacterium tuberculosis (strain CDC 1551 / Oshkosh).